We begin with the raw amino-acid sequence, 388 residues long: Phosphoribosylformylglycinamidine cyclo-ligase, chloroplastic/mitochondrial (388 aa).

The protein belongs to the AIR synthase family.

Its subcellular location is the plastid. It localises to the chloroplast. The protein resides in the mitochondrion. The enzyme catalyses 2-formamido-N(1)-(5-O-phospho-beta-D-ribosyl)acetamidine + ATP = 5-amino-1-(5-phospho-beta-D-ribosyl)imidazole + ADP + phosphate + H(+). Its pathway is purine metabolism; IMP biosynthesis via de novo pathway; 5-amino-1-(5-phospho-D-ribosyl)imidazole from N(2)-formyl-N(1)-(5-phospho-D-ribosyl)glycinamide: step 2/2. The polypeptide is Phosphoribosylformylglycinamidine cyclo-ligase, chloroplastic/mitochondrial (PUR5) (Vigna unguiculata (Cowpea)).